The primary structure comprises 161 residues: Putative pre-16S rRNA nuclease (161 aa).

The protein belongs to the YqgF nuclease family.

The protein resides in the cytoplasm. Its function is as follows. Could be a nuclease involved in processing of the 5'-end of pre-16S rRNA. The chain is Putative pre-16S rRNA nuclease from Bradyrhizobium diazoefficiens (strain JCM 10833 / BCRC 13528 / IAM 13628 / NBRC 14792 / USDA 110).